The primary structure comprises 68 residues: Arabinogalactan peptide 1 (68 aa).

The signal sequence occupies residues 1–30; that stretch reads MAGQLKSKIVAVAVAAVVVVASSLVGTASA. Serine 40 is lipidated: GPI-anchor amidated serine. A propeptide spans 41–68 (removed in mature form); that stretch reads GATATAAAAPAFAAVSVAAAALGGYLFC.

This sequence belongs to the AG-peptide AGP family. Post-translationally, O-glycosylated on hydroxyprolines; noncontiguous hydroxylproline residues are glycosylated with arabinogalactan. In terms of tissue distribution, expressed in roots, stems, flowers and seeds.

It localises to the vacuole. It is found in the aleurone grain membrane. Its function is as follows. Proteoglycan that seems to be implicated in diverse developmental roles such as differentiation, cell-cell recognition, embryogenesis and programmed cell death. This Oryza sativa subsp. japonica (Rice) protein is Arabinogalactan peptide 1 (AGPEP1).